Here is a 93-residue protein sequence, read N- to C-terminus: Protein E7 (93 aa).

An E7 terminal domain region spans residues 1–42 (MRGETPTLKDIVLFDIPTCETPIDLYCYEQLDSSDEDDQAKQ). Positions 25-29 (LYCYE) match the LXCXE motif; interaction with host RB1 and TMEM173/STING motif. Residues 53–89 (CTQCYKSVKLVVQCTEADIRNLQQMLLGTLDIVCPLC) fold into a zinc finger. The Nuclear export signal signature appears at 71–79 (IRNLQQMLL).

Belongs to the papillomaviridae E7 protein family. As to quaternary structure, homodimer. Homooligomer. Interacts with host RB1; this interaction induces dissociation of RB1-E2F1 complex thereby disrupting RB1 activity. Interacts with host EP300; this interaction represses EP300 transcriptional activity. Interacts with protein E2; this interaction inhibits E7 oncogenic activity. Interacts with host TMEM173/STING; this interaction impairs the ability of TMEM173/STING to sense cytosolic DNA and promote the production of type I interferon (IFN-alpha and IFN-beta). Post-translationally, highly phosphorylated.

The protein localises to the host cytoplasm. It localises to the host nucleus. Plays a role in viral genome replication by driving entry of quiescent cells into the cell cycle. Stimulation of progression from G1 to S phase allows the virus to efficiently use the cellular DNA replicating machinery to achieve viral genome replication. E7 protein has both transforming and trans-activating activities. Induces the disassembly of the E2F1 transcription factor from RB1, with subsequent transcriptional activation of E2F1-regulated S-phase genes. Interferes with host histone deacetylation mediated by HDAC1 and HDAC2, leading to transcription activation. Also plays a role in the inhibition of both antiviral and antiproliferative functions of host interferon alpha. Interaction with host TMEM173/STING impairs the ability of TMEM173/STING to sense cytosolic DNA and promote the production of type I interferon (IFN-alpha and IFN-beta). The protein is Protein E7 of Human papillomavirus 42.